The chain runs to 113 residues: MVSFRAFTVAASLFATLAAATPLDTALPRAADQCNVSNQQCCNSVQQASSGPAALILGLLGVVLQDVNVLVGLDCSPITVIGGGNGGCNASPVCCENNSFGSLISIGCVPISI.

Positions 1–20 are cleaved as a signal peptide; it reads MVSFRAFTVAASLFATLAAA. Intrachain disulfides connect C34–C94, C41–C88, C42–C75, and C95–C108. N-linked (GlcNAc...) asparagine glycosylation occurs at N35. An N-linked (GlcNAc...) asparagine glycan is attached at N97.

Belongs to the fungal hydrophobin family. In terms of assembly, self-assembles to form functional amyloid fibrils called rodlets. Self-assembly into fibrillar rodlets occurs spontaneously at hydrophobic:hydrophilic interfaces and the rodlets further associate laterally to form amphipathic monolayers.

Its subcellular location is the secreted. The protein resides in the cell wall. Its function is as follows. Aerial growth, conidiation, and dispersal of filamentous fungi in the environment rely upon a capability of their secreting small amphipathic proteins called hydrophobins (HPBs) with low sequence identity. Class I can self-assemble into an outermost layer of rodlet bundles on aerial cell surfaces, conferring cellular hydrophobicity that supports fungal growth, development and dispersal; whereas Class II form highly ordered films at water-air interfaces through intermolecular interactions but contribute nothing to the rodlet structure. Fvh1 is a class I hydrophobin involved in fruiting body initiation. This chain is Class I hydrophobin fvh1, found in Flammulina velutipes (Agaricus velutipes).